A 320-amino-acid chain; its full sequence is Acetyl-coenzyme A carboxylase carboxyl transferase subunit alpha (320 aa).

Residues 41-295 (KIEEKAQQAL…GDAIAAAFAE (255 aa)) enclose the CoA carboxyltransferase C-terminal domain.

It belongs to the AccA family. As to quaternary structure, acetyl-CoA carboxylase is a heterohexamer composed of biotin carboxyl carrier protein (AccB), biotin carboxylase (AccC) and two subunits each of ACCase subunit alpha (AccA) and ACCase subunit beta (AccD).

The protein resides in the cytoplasm. The catalysed reaction is N(6)-carboxybiotinyl-L-lysyl-[protein] + acetyl-CoA = N(6)-biotinyl-L-lysyl-[protein] + malonyl-CoA. The protein operates within lipid metabolism; malonyl-CoA biosynthesis; malonyl-CoA from acetyl-CoA: step 1/1. Functionally, component of the acetyl coenzyme A carboxylase (ACC) complex. First, biotin carboxylase catalyzes the carboxylation of biotin on its carrier protein (BCCP) and then the CO(2) group is transferred by the carboxyltransferase to acetyl-CoA to form malonyl-CoA. The polypeptide is Acetyl-coenzyme A carboxylase carboxyl transferase subunit alpha (Rhodopseudomonas palustris (strain ATCC BAA-98 / CGA009)).